Consider the following 246-residue polypeptide: Protein DEHYDRATION-INDUCED 19 homolog 3 (246 aa).

The interval 185–230 (ERSKAPVPIPDDTSIHKDTPAQPWESRIDSSLTSEEREQKRKQATD) is disordered. Positions 218–229 (SEEREQKRKQAT) are enriched in basic and acidic residues.

It belongs to the Di19 family.

This is Protein DEHYDRATION-INDUCED 19 homolog 3 (DI19-3) from Oryza sativa subsp. japonica (Rice).